The primary structure comprises 116 residues: NADH-ubiquinone oxidoreductase chain 3 (116 aa).

3 consecutive transmembrane segments (helical) span residues 8–28, 56–76, and 88–108; these read VVAT…LPSL, FFLI…LLPL, and TLLW…YEWF.

Belongs to the complex I subunit 3 family.

It localises to the mitochondrion membrane. The catalysed reaction is a ubiquinone + NADH + 5 H(+)(in) = a ubiquinol + NAD(+) + 4 H(+)(out). Functionally, core subunit of the mitochondrial membrane respiratory chain NADH dehydrogenase (Complex I) that is believed to belong to the minimal assembly required for catalysis. Complex I functions in the transfer of electrons from NADH to the respiratory chain. The immediate electron acceptor for the enzyme is believed to be ubiquinone. The chain is NADH-ubiquinone oxidoreductase chain 3 (MT-ND3) from Scyliorhinus canicula (Small-spotted catshark).